Reading from the N-terminus, the 215-residue chain is RNA pyrophosphohydrolase (215 aa).

A Nudix hydrolase domain is found at 6-149 (GFRPNVGIIL…KRDVYQLALT (144 aa)). The short motif at 38 to 59 (GGIKYGETPMQAMYRELHEETG) is the Nudix box element.

It belongs to the Nudix hydrolase family. RppH subfamily. It depends on a divalent metal cation as a cofactor.

Its function is as follows. Accelerates the degradation of transcripts by removing pyrophosphate from the 5'-end of triphosphorylated RNA, leading to a more labile monophosphorylated state that can stimulate subsequent ribonuclease cleavage. The sequence is that of RNA pyrophosphohydrolase from Burkholderia lata (strain ATCC 17760 / DSM 23089 / LMG 22485 / NCIMB 9086 / R18194 / 383).